Here is a 250-residue protein sequence, read N- to C-terminus: ATP synthase subunit a (250 aa).

Transmembrane regions (helical) follow at residues 26-46 (FTNASLFMVATVGAAAGFLYL), 84-104 (FFPMVFSLFMFILTANLLGMV), 114-134 (IIVTFALAVFVIGTVILYGFY), 143-163 (LFVPHGVPGALLPLVVAIEII), 193-213 (FVASLSAFGALGIGGAILPLI), and 216-236 (VALTGLEFLVAFLQAYVFAVL).

This sequence belongs to the ATPase A chain family. F-type ATPases have 2 components, CF(1) - the catalytic core - and CF(0) - the membrane proton channel. CF(1) has five subunits: alpha(3), beta(3), gamma(1), delta(1), epsilon(1). CF(0) has three main subunits: a(1), b(2) and c(9-12). The alpha and beta chains form an alternating ring which encloses part of the gamma chain. CF(1) is attached to CF(0) by a central stalk formed by the gamma and epsilon chains, while a peripheral stalk is formed by the delta and b chains.

Its subcellular location is the cell inner membrane. Functionally, key component of the proton channel; it plays a direct role in the translocation of protons across the membrane. The chain is ATP synthase subunit a from Sinorhizobium medicae (strain WSM419) (Ensifer medicae).